We begin with the raw amino-acid sequence, 394 residues long: Elongation factor Tu (394 aa).

Positions 10-204 (KPHVNVGTIG…ALDTYIPEPE (195 aa)) constitute a tr-type G domain. The G1 stretch occupies residues 19–26 (GHVDHGKT). 19–26 (GHVDHGKT) contributes to the GTP binding site. Residue T26 coordinates Mg(2+). Residues 60–64 (GITIN) form a G2 region. The segment at 81–84 (DCPG) is G3. GTP contacts are provided by residues 81 to 85 (DCPGH) and 136 to 139 (NKCD). A G4 region spans residues 136–139 (NKCD). The segment at 174-176 (SAL) is G5.

This sequence belongs to the TRAFAC class translation factor GTPase superfamily. Classic translation factor GTPase family. EF-Tu/EF-1A subfamily. As to quaternary structure, monomer.

The protein resides in the cytoplasm. It carries out the reaction GTP + H2O = GDP + phosphate + H(+). Its function is as follows. GTP hydrolase that promotes the GTP-dependent binding of aminoacyl-tRNA to the A-site of ribosomes during protein biosynthesis. The chain is Elongation factor Tu from Vibrio cholerae serotype O1 (strain ATCC 39541 / Classical Ogawa 395 / O395).